A 544-amino-acid chain; its full sequence is Probable protein kinase UbiB (544 aa).

The Protein kinase domain occupies 123–505 (EFDEQALASA…GRQKSHNVRS (383 aa)). ATP-binding positions include 129–137 (LASASIAQV) and lysine 156. Aspartate 291 functions as the Proton acceptor in the catalytic mechanism. The chain crosses the membrane as a helical span at residues 522-540 (LPLWLSCGTLVTVLLVLLL).

This sequence belongs to the ABC1 family. UbiB subfamily.

The protein localises to the cell inner membrane. It functions in the pathway cofactor biosynthesis; ubiquinone biosynthesis [regulation]. Is probably a protein kinase regulator of UbiI activity which is involved in aerobic coenzyme Q (ubiquinone) biosynthesis. The sequence is that of Probable protein kinase UbiB from Actinobacillus pleuropneumoniae serotype 5b (strain L20).